Here is a 226-residue protein sequence, read N- to C-terminus: Thymidylate kinase (226 aa).

Gly20–Ser27 is an ATP binding site.

It belongs to the thymidylate kinase family.

The catalysed reaction is dTMP + ATP = dTDP + ADP. Its function is as follows. Phosphorylation of dTMP to form dTDP in both de novo and salvage pathways of dTTP synthesis. This Bradyrhizobium sp. (strain BTAi1 / ATCC BAA-1182) protein is Thymidylate kinase.